The sequence spans 505 residues: Aspartyl/glutamyl-tRNA(Asn/Gln) amidotransferase subunit B (505 aa).

This sequence belongs to the GatB/GatE family. GatB subfamily. As to quaternary structure, heterotrimer of A, B and C subunits.

The catalysed reaction is L-glutamyl-tRNA(Gln) + L-glutamine + ATP + H2O = L-glutaminyl-tRNA(Gln) + L-glutamate + ADP + phosphate + H(+). The enzyme catalyses L-aspartyl-tRNA(Asn) + L-glutamine + ATP + H2O = L-asparaginyl-tRNA(Asn) + L-glutamate + ADP + phosphate + 2 H(+). In terms of biological role, allows the formation of correctly charged Asn-tRNA(Asn) or Gln-tRNA(Gln) through the transamidation of misacylated Asp-tRNA(Asn) or Glu-tRNA(Gln) in organisms which lack either or both of asparaginyl-tRNA or glutaminyl-tRNA synthetases. The reaction takes place in the presence of glutamine and ATP through an activated phospho-Asp-tRNA(Asn) or phospho-Glu-tRNA(Gln). The sequence is that of Aspartyl/glutamyl-tRNA(Asn/Gln) amidotransferase subunit B from Corynebacterium jeikeium (strain K411).